Here is a 424-residue protein sequence, read N- to C-terminus: Appressorium protein ROW1 (424 aa).

Positions 1–21 are cleaved as a signal peptide; it reads MTKLTLTVALVSALLASGASA. Disordered stretches follow at residues 19–54, 69–90, 278–304, and 327–398; these read ASAQ…WQPK, ANRI…GYNT, SGST…CSSV, and SSSA…TQGA. The Extracellular segment spans residues 22–403; it reads QQPTGTGNGP…NTQGAASSAS (382 aa). Residues 37 to 54 are compositionally biased toward polar residues; sequence TDLNRNQPTKSWTQWQPK. 2 stretches are compositionally biased toward low complexity: residues 295–304 and 327–347; these read APSSSQCSSV and SSSA…SASS. Gly residues predominate over residues 362–382; that stretch reads SGTGSGSGSGSGSGSGSGSGS. Low complexity predominate over residues 383–398; the sequence is SSGSSSSGSSSNTQGA. A helical membrane pass occupies residues 404-424; sequence SLTISVGLAGLVAIGAAAFAL.

It is found in the cell membrane. The protein localises to the secreted. Its function is as follows. Plays a role in the formation of the appressorium, a specialized infection structure with the purpose of penetrating the host surface, and is required for proper remodeling of the appressorium wall and vesicle secretion. In Mycosarcoma maydis (Corn smut fungus), this protein is Appressorium protein ROW1.